The following is a 332-amino-acid chain: Biotin synthase (332 aa).

The 230-residue stretch at 53–282 (YFGKKVKLNM…SKEIRISGGR (230 aa)) folds into the Radical SAM core domain. Residues Cys71, Cys75, and Cys78 each coordinate [4Fe-4S] cluster. Residues Cys115, Cys147, Cys207, and Arg277 each contribute to the [2Fe-2S] cluster site.

Belongs to the radical SAM superfamily. Biotin synthase family. Homodimer. The cofactor is [4Fe-4S] cluster. Requires [2Fe-2S] cluster as cofactor.

The enzyme catalyses (4R,5S)-dethiobiotin + (sulfur carrier)-SH + 2 reduced [2Fe-2S]-[ferredoxin] + 2 S-adenosyl-L-methionine = (sulfur carrier)-H + biotin + 2 5'-deoxyadenosine + 2 L-methionine + 2 oxidized [2Fe-2S]-[ferredoxin]. Its pathway is cofactor biosynthesis; biotin biosynthesis; biotin from 7,8-diaminononanoate: step 2/2. Functionally, catalyzes the conversion of dethiobiotin (DTB) to biotin by the insertion of a sulfur atom into dethiobiotin via a radical-based mechanism. The protein is Biotin synthase of Bacillus cytotoxicus (strain DSM 22905 / CIP 110041 / 391-98 / NVH 391-98).